The chain runs to 484 residues: UDP-N-acetylmuramate--L-alanine ligase (484 aa).

An ATP-binding site is contributed by 125–131; it reads GTHGKTT.

The protein belongs to the MurCDEF family.

It is found in the cytoplasm. The catalysed reaction is UDP-N-acetyl-alpha-D-muramate + L-alanine + ATP = UDP-N-acetyl-alpha-D-muramoyl-L-alanine + ADP + phosphate + H(+). It participates in cell wall biogenesis; peptidoglycan biosynthesis. Functionally, cell wall formation. This is UDP-N-acetylmuramate--L-alanine ligase from Buchnera aphidicola subsp. Acyrthosiphon pisum (strain 5A).